A 636-amino-acid polypeptide reads, in one-letter code: tRNA 5-methylaminomethyl-2-thiouridine biosynthesis bifunctional protein MnmC (636 aa).

The interval methionine 1–histidine 202 is tRNA (mnm(5)s(2)U34)-methyltransferase. Residues isoleucine 227 to serine 636 form an FAD-dependent cmnm(5)s(2)U34 oxidoreductase region.

In the N-terminal section; belongs to the methyltransferase superfamily. tRNA (mnm(5)s(2)U34)-methyltransferase family. It in the C-terminal section; belongs to the DAO family. FAD serves as cofactor.

The protein localises to the cytoplasm. The catalysed reaction is 5-aminomethyl-2-thiouridine(34) in tRNA + S-adenosyl-L-methionine = 5-methylaminomethyl-2-thiouridine(34) in tRNA + S-adenosyl-L-homocysteine + H(+). In terms of biological role, catalyzes the last two steps in the biosynthesis of 5-methylaminomethyl-2-thiouridine (mnm(5)s(2)U) at the wobble position (U34) in tRNA. Catalyzes the FAD-dependent demodification of cmnm(5)s(2)U34 to nm(5)s(2)U34, followed by the transfer of a methyl group from S-adenosyl-L-methionine to nm(5)s(2)U34, to form mnm(5)s(2)U34. This Shewanella halifaxensis (strain HAW-EB4) protein is tRNA 5-methylaminomethyl-2-thiouridine biosynthesis bifunctional protein MnmC.